The sequence spans 329 residues: Malate dehydrogenase (329 aa).

12-18 (GAAGQIC) lines the NAD(+) pocket. The substrate site is built by R95 and R101. NAD(+)-binding positions include N108, Q115, and 132 to 134 (VGN). N134 and R165 together coordinate substrate. The Proton acceptor role is filled by H190.

Belongs to the LDH/MDH superfamily. MDH type 2 family. Homodimer.

The catalysed reaction is (S)-malate + NAD(+) = oxaloacetate + NADH + H(+). Catalyzes the reversible oxidation of malate to oxaloacetate. The chain is Malate dehydrogenase from Aquaspirillum arcticum.